The sequence spans 399 residues: Homocysteine-responsive endoplasmic reticulum-resident ubiquitin-like domain member 2 protein (399 aa).

Positions 10–89 (VTLVIKAPNQ…HMVHLVCASR (80 aa)) constitute a Ubiquitin-like domain. Disordered regions lie at residues 88-144 (SRTP…SIRH) and 211-250 (ASNQSPSNGENAQPVPRPVINSESPPPNPPRAPPNVAPEM). Positions 95–106 (PKASTSNKSMGT) are enriched in polar residues. The span at 107–124 (ASISRSSSEHSGSASPAS) shows a compositional bias: low complexity. Positions 211-221 (ASNQSPSNGEN) are enriched in polar residues. The span at 234–246 (SPPPNPPRAPPNV) shows a compositional bias: pro residues. Residues 299–319 (FVMVMGAMILVYMHQAGWFPL) traverse the membrane as a helical segment.

It is found in the membrane. In terms of biological role, could be involved in the unfolded protein response (UPR) pathway. The protein is Homocysteine-responsive endoplasmic reticulum-resident ubiquitin-like domain member 2 protein (herpud2) of Xenopus tropicalis (Western clawed frog).